The chain runs to 389 residues: Cuticlin-3 (389 aa).

Positions 1–19 (MARYSLGLGLCLLVASVSA) are cleaved as a signal peptide. At 20–354 (IPVDNNVEGE…ELCISSFHIS (335 aa)) the chain is on the extracellular side. In terms of domain architecture, ZP spans 33 to 278 (ECGPTSITVN…PTCSEPQGFG (246 aa)). Asn-284 is a glycosylation site (N-linked (GlcNAc...) asparagine). A helical membrane pass occupies residues 355-375 (VVTVFLGLTVFVAIFITYMIV). Over 376–389 (SRMMVPSDKMQSAC) the chain is Cytoplasmic.

The protein localises to the cell membrane. In terms of biological role, plays a role in alae formation in L1 larvae. The protein is Cuticlin-3 of Caenorhabditis elegans.